The following is a 775-amino-acid chain: Subtilisin-like protease SBT1.5 (775 aa).

The first 19 residues, methionine 1–serine 19, serve as a signal peptide directing secretion. Residues alanine 20–histidine 103 constitute a propeptide, activation peptide. In terms of domain architecture, Inhibitor I9 spans threonine 27–histidine 103. Residues serine 107–methionine 617 enclose the Peptidase S8 domain. Aspartate 137 functions as the Charge relay system in the catalytic mechanism. Residue asparagine 196 is glycosylated (N-linked (GlcNAc...) asparagine). The active-site Charge relay system is histidine 210. In terms of domain architecture, PA spans methionine 367–arginine 459. Serine 549 (charge relay system) is an active-site residue. 3 N-linked (GlcNAc...) asparagine glycosylation sites follow: asparagine 599, asparagine 638, and asparagine 762.

It belongs to the peptidase S8 family.

The protein resides in the secreted. The polypeptide is Subtilisin-like protease SBT1.5 (Arabidopsis thaliana (Mouse-ear cress)).